A 341-amino-acid chain; its full sequence is Phenazine O-methyltransferase PhzM (341 aa).

S-adenosyl-L-methionine contacts are provided by residues aspartate 205 and 231 to 233 (GDF). Histidine 251 (proton acceptor) is an active-site residue.

This sequence belongs to the class I-like SAM-binding methyltransferase superfamily. Cation-independent O-methyltransferase family. In terms of assembly, homodimer.

It catalyses the reaction 1,6-dihydroxyphenazine + S-adenosyl-L-methionine = 1-hydroxy-6-methoxyphenazine + S-adenosyl-L-homocysteine + H(+). It carries out the reaction 1-hydroxy-6-methoxyphenazine + S-adenosyl-L-methionine = 1,6-dimethoxyphenazine + S-adenosyl-L-homocysteine + H(+). The enzyme catalyses 1-hydroxy-6-methoxyphenazine N(10)-oxide + S-adenosyl-L-methionine = 1,6-dimethoxyphenazine N(5)-oxide + S-adenosyl-L-homocysteine. The catalysed reaction is 1,6-dihydroxyphenazine N(5),N(10)-dioxide + S-adenosyl-L-methionine = 1-hydroxy-6-methoxyphenazine N(5),N(10)-dioxide + S-adenosyl-L-homocysteine. It catalyses the reaction 1-hydroxy-6-methoxyphenazine N(5),N(10)-dioxide + S-adenosyl-L-methionine = 1,6-dimethoxyphenazine N(5),N(10)-dioxide + S-adenosyl-L-homocysteine. In terms of biological role, involved in the biosynthesis of phenazine natural products including myxin, an N(5),N(10)-dioxide phenazine antiobiotic, which has antimicrobial activity. O-methyltransferase, which converts iodinin (1,6-dihydroxyphenazine N(5),N(10)-dioxide) to myxin (1-hydroxy-6-methoxyphenazine N(5),N(10)-dioxide). Catalyzes both monomethoxy and dimethoxy formation of phenazine natural compounds. Acts on a wide variety of substrates, catalyzing O-methylation of phenazines with non-, mono- or di-N-oxide. Highest activity with 1,6-dihydroxyphenazine (DHP) as substrate. Less active with monohydroxy-containing and monohydroxy-monomethoxy-containing phenazines. Least active with non-phenazine substrates, such as 8-hydroxyquinoline and 6-hydroxyquinoline. Is not able to convert 1-hydroxyphenazine to 1-hydroxy-N5-methylphenazine (pyocyanine), hence does not function as an N-methyltransferase. This chain is Phenazine O-methyltransferase PhzM, found in Lysobacter antibioticus.